An 877-amino-acid polypeptide reads, in one-letter code: MAKKRIYEVAKEVGVDNKVVVQKAKDLGFDVKNHMSSIDDSQVAKLKSSFQNSAPAEKKAEKSATKNNKIKISVSSIRKNEKKPEENNTPKKSNRRRNNKRRSSDRARDNKERDAKSNTGRPKAAALLQQFKQKQRAEEGQLNREAQKAKKEYHEHLKHPKKEQSEKDNKKTVKESNNKKVEQQVEKKVIGPKILKPSPARLKKNQPADNKEKVTTPRVTIPEAPKEEKRGNGRGRNMGKPGRKGKNQFVNGHSERSDRSERKRRKNKKHQQEQQKPRKQITKRKERPLPDILVYEEGMNAQDIGKLIHREPAEIVKKLFMLGVMTNQNQSLDKDTIELLAAEYGIDAKQKVHEDISDIDTLYDKRMEASKKSKNQIKRPPVVTIMGHVDHGKTTLLDRLRHTHVSAHEAGGITQRIGAYQVRLDDRLITFLDTPGHAAFSNMRARGAEITDIVVLVVAADDGVMPQTVEAIDHAKSANVPIIVAINKMDKPGANPQHVTEELMKYNLIPEDYGGDTIFVNISAKTGQNVDDLLQMILLQADVMELKANPDEMAIGTVIEARLSRGRGPVADVLIQQGTLNIGDPIVVGDTFGRVRTMTNDRGRQVKKATPSEPVEITGLNDVPESADKLVEFKDEKTARSVGEARAQQSLQKSRENVQHVTLDNLFDTMKKENMKEVDIVLKADVQGSVEALQQSLEKIEVEGVRVNIIHSGVGAINESDVTLAGASNAFIIGFNVRPTATAKSQAETDGVDIRLYSIIYKAIDDVTAAMKGMLEPTYEEKVIGNLTVRETWKVSKVGTIAGSFVDKGIVKNDSKIRVIRDGIVKYDGEIASLKRFKDDVKEVKQGNDCGLTIKDYNDIKVGDEFEVYEMQQVEPK.

A disordered region spans residues 48–289 (SSFQNSAPAE…QITKRKERPL (242 aa)). The span at 78–89 (RKNEKKPEENNT) shows a compositional bias: basic and acidic residues. Over residues 92–101 (KSNRRRNNKR) the composition is skewed to basic residues. Residues 102 to 116 (RSSDRARDNKERDAK) are compositionally biased toward basic and acidic residues. Residues 123 to 132 (KAAALLQQFK) show a composition bias toward low complexity. Basic and acidic residues-rich tracts occupy residues 135–155 (QRAE…EYHE) and 162–189 (KEQS…EKKV). Residues 277 to 286 (PRKQITKRKE) are compositionally biased toward basic residues. The tr-type G domain occupies 378-547 (KRPPVVTIMG…LLQADVMELK (170 aa)). The tract at residues 387-394 (GHVDHGKT) is G1. 387–394 (GHVDHGKT) provides a ligand contact to GTP. The tract at residues 412–416 (GITQR) is G2. Residues 433-436 (DTPG) are G3. GTP is bound by residues 433–437 (DTPGH) and 487–490 (NKMD). Residues 487 to 490 (NKMD) are G4. The G5 stretch occupies residues 523 to 525 (SAK).

It belongs to the TRAFAC class translation factor GTPase superfamily. Classic translation factor GTPase family. IF-2 subfamily.

The protein localises to the cytoplasm. Functionally, one of the essential components for the initiation of protein synthesis. Protects formylmethionyl-tRNA from spontaneous hydrolysis and promotes its binding to the 30S ribosomal subunits. Also involved in the hydrolysis of GTP during the formation of the 70S ribosomal complex. This is Translation initiation factor IF-2 from Lactobacillus acidophilus (strain ATCC 700396 / NCK56 / N2 / NCFM).